Consider the following 477-residue polypeptide: UDP-N-acetylmuramate--L-alanine ligase (477 aa).

ATP is bound at residue 112-118; it reads GTHGKTT.

It belongs to the MurCDEF family.

It localises to the cytoplasm. It catalyses the reaction UDP-N-acetyl-alpha-D-muramate + L-alanine + ATP = UDP-N-acetyl-alpha-D-muramoyl-L-alanine + ADP + phosphate + H(+). The protein operates within cell wall biogenesis; peptidoglycan biosynthesis. Cell wall formation. The polypeptide is UDP-N-acetylmuramate--L-alanine ligase (Verminephrobacter eiseniae (strain EF01-2)).